A 111-amino-acid polypeptide reads, in one-letter code: Putative protein p34 (111 aa).

The polypeptide is Putative protein p34 (34) (Acyrthosiphon pisum secondary endosymbiont phage 1 (Bacteriophage APSE-1)).